The following is a 168-amino-acid chain: Pheromone-binding protein (168 aa).

Positions 1-26 are cleaved as a signal peptide; sequence MNKTTTKMKVAVVAIVVYLAVGNVDS. 3 disulfides stabilise this stretch: Cys45–Cys80, Cys76–Cys134, and Cys123–Cys143.

It belongs to the PBP/GOBP family. In terms of assembly, homodimer. As to expression, antenna.

Its function is as follows. This major soluble protein in olfactory sensilla of male moths might serve to solubilize the extremely hydrophobic pheromone molecules and to transport pheromone through the aqueous lymph to receptors located on olfactory cilia. PBP is also found in sensilla from female M.sexta antennae. In Manduca sexta (Tobacco hawkmoth), this protein is Pheromone-binding protein.